Reading from the N-terminus, the 588-residue chain is Probable G-protein coupled receptor 162 (588 aa).

Residues 1–17 (MARGGLGAEEASLRSNA) are Extracellular-facing. The helical transmembrane segment at 18–38 (LSWLACGLLALLANAWIILSI) threads the bilayer. The Cytoplasmic portion of the chain corresponds to 39–49 (SAKQQKHKPLE). Residues 50 to 70 (LLLCFLAGTHILMAAVPLTTF) traverse the membrane as a helical segment. Over 71–91 (AVVQLRRQASSDYDWNESICK) the chain is Extracellular. The N-linked (GlcNAc...) asparagine glycan is linked to Asn-86. The chain crosses the membrane as a helical span at residues 92-112 (VFVSTYYTLALATCFTVASLS). At 113–133 (YHRMWMVRWPVNYRLSNAKKQ) the chain is on the cytoplasmic side. Residues 134-154 (ALHAVMGIWMVSFILSTLPSI) form a helical membrane-spanning segment. Residues 155–174 (GWHNNGERYYARGCQFIVSK) are Extracellular-facing. Residues 175–195 (IGLGFGVCFSLLLLGGIVMGL) form a helical membrane-spanning segment. At 196 to 275 (VCVAITFYQT…SLQVTNLVSA (80 aa)) the chain is on the cytoplasmic side. A helical membrane pass occupies residues 276 to 296 (IVFLYDSLTGVPILVVSFFSL). The Extracellular segment spans residues 297-303 (KSDSAPP). Residues 304-324 (WMVLAVLWCSMAQTLLLPSFI) form a helical membrane-spanning segment. Topologically, residues 325–588 (WSCERYRADV…GNPIFPQLTL (264 aa)) are cytoplasmic. Phosphoserine occurs at positions 413 and 435. Disordered stretches follow at residues 511–545 (ETPLPSPTASPGPSPRRPRPLGFSPRRLSLGSPDS) and 561–588 (SLTGSEGSSRAWGRPWGPGNPIFPQLTL). Positions 514–525 (LPSPTASPGPSP) are enriched in pro residues. Residues 530-540 (PLGFSPRRLSL) show a composition bias toward low complexity.

This sequence belongs to the G-protein coupled receptor 1 family.

The protein resides in the cell membrane. Its function is as follows. Orphan receptor. This Mus musculus (Mouse) protein is Probable G-protein coupled receptor 162 (Gpr162).